A 734-amino-acid polypeptide reads, in one-letter code: Probable carboxypeptidase X1 (734 aa).

An N-terminal signal peptide occupies residues 1 to 20; the sequence is MWGLLLALAAFAPAVGPALG. The tract at residues 30–62 is disordered; sequence AQPGTTKVPGSTPALHSSPAQPPAETANGTSEQ. A compositionally biased stretch (polar residues) spans 32–48; the sequence is PGTTKVPGSTPALHSSP. Asn57, Asn210, Asn220, and Asn318 each carry an N-linked (GlcNAc...) asparagine glycan. Residues 113-274 enclose the F5/8 type C domain; the sequence is TGCPPLGLES…PCLRAEILAC (162 aa). An intrachain disulfide couples Cys115 to Cys274. Positions 298-621 constitute a Peptidase M14 domain; that stretch reads QHHNYKAMRK…DALLTYLEQV (324 aa). Zn(2+) contacts are provided by His360 and Glu363. Asn428 and Asn472 each carry an N-linked (GlcNAc...) asparagine glycan. His498 is a binding site for Zn(2+). Catalysis depends on Glu591, which acts as the Proton donor/acceptor.

It belongs to the peptidase M14 family. Requires Zn(2+) as cofactor.

The protein resides in the secreted. May be involved in cell-cell interactions. No carboxypeptidase activity was found yet. This is Probable carboxypeptidase X1 (CPXM1) from Homo sapiens (Human).